We begin with the raw amino-acid sequence, 125 residues long: Protein ELF4-LIKE 1 (125 aa).

Positions 1–18 (MEASRNRSLVGNNRSPEM) are enriched in polar residues. Positions 1–28 (MEASRNRSLVGNNRSPEMNENDGEDVAA) are disordered.

It belongs to the EARLY FLOWERING 4 family. In terms of assembly, homodimer.

It localises to the nucleus. Its function is as follows. Component of the central CCA1/LHY-TOC1 feedback loop in the circadian clock that promotes clock accuracy and is required for sustained rhythms in the absence of daily light/dark cycles. This chain is Protein ELF4-LIKE 1 (EFL1), found in Arabidopsis thaliana (Mouse-ear cress).